The primary structure comprises 284 residues: Methylglyoxal reductase YeaE (284 aa).

The protein belongs to the aldo/keto reductase family.

The enzyme catalyses hydroxyacetone + NADP(+) = methylglyoxal + NADPH + H(+). The catalysed reaction is a primary alcohol + NADP(+) = an aldehyde + NADPH + H(+). Aldo-keto reductase that contributes to cellular methylglyoxal detoxification by catalyzing the NADPH-dependent conversion of methylglyoxal to acetol. It also exhibits activity with glyoxal and probably plays a significant role in detoxification of glyoxal in vivo. Can also use aromatic aldehydes such as 4-nitrobenzaldehyde, 3-nitrobenzaldehyde and benzaldehyde, and phenylglyoxal. This is Methylglyoxal reductase YeaE (yeaE) from Escherichia coli (strain K12).